The primary structure comprises 356 residues: DNA polymerase IV (356 aa).

The 182-residue stretch at 7-188 (IIHIDMDCFY…LPLKKISGVG (182 aa)) folds into the UmuC domain. 2 residues coordinate Mg(2+): Asp11 and Asp106. Residue Glu107 is part of the active site.

Belongs to the DNA polymerase type-Y family. Monomer. Requires Mg(2+) as cofactor.

It is found in the cytoplasm. The catalysed reaction is DNA(n) + a 2'-deoxyribonucleoside 5'-triphosphate = DNA(n+1) + diphosphate. Its function is as follows. Poorly processive, error-prone DNA polymerase involved in untargeted mutagenesis. Copies undamaged DNA at stalled replication forks, which arise in vivo from mismatched or misaligned primer ends. These misaligned primers can be extended by PolIV. Exhibits no 3'-5' exonuclease (proofreading) activity. May be involved in translesional synthesis, in conjunction with the beta clamp from PolIII. This chain is DNA polymerase IV, found in Glaesserella parasuis serovar 5 (strain SH0165) (Haemophilus parasuis).